The sequence spans 121 residues: Small ribosomal subunit protein uS13 (121 aa).

The disordered stretch occupies residues 91–121 (HRRGLPTRGQNTKNNARTRKGPVKTVANKKK). Basic residues predominate over residues 106-121 (ARTRKGPVKTVANKKK).

This sequence belongs to the universal ribosomal protein uS13 family. In terms of assembly, part of the 30S ribosomal subunit. Forms a loose heterodimer with protein S19. Forms two bridges to the 50S subunit in the 70S ribosome.

Functionally, located at the top of the head of the 30S subunit, it contacts several helices of the 16S rRNA. In the 70S ribosome it contacts the 23S rRNA (bridge B1a) and protein L5 of the 50S subunit (bridge B1b), connecting the 2 subunits; these bridges are implicated in subunit movement. Contacts the tRNAs in the A and P-sites. In Macrococcus caseolyticus (strain JCSC5402) (Macrococcoides caseolyticum), this protein is Small ribosomal subunit protein uS13.